The chain runs to 432 residues: Probable protein phosphatase 2C 75 (432 aa).

A PPM-type phosphatase domain is found at 44 to 356 (VACLFTRQGK…DDCAVVCLFL (313 aa)). D80, G81, D301, and D347 together coordinate Mn(2+). Residues 372–408 (SPRMPALSGITRPNSKRVTPDDVDDGSDSNVSGDERS) form a disordered region.

Belongs to the PP2C family. Mg(2+) serves as cofactor. Mn(2+) is required as a cofactor.

The enzyme catalyses O-phospho-L-seryl-[protein] + H2O = L-seryl-[protein] + phosphate. It catalyses the reaction O-phospho-L-threonyl-[protein] + H2O = L-threonyl-[protein] + phosphate. This chain is Probable protein phosphatase 2C 75, found in Oryza sativa subsp. japonica (Rice).